Consider the following 339-residue polypeptide: Cathepsin B (339 aa).

An N-terminal signal peptide occupies residues 1–17 (MWQLWASLCCLLALADA). Residues 18 to 79 (RSRPSFHPLS…QRVMFTEDLK (62 aa)) constitute a propeptide, activation peptide. 6 disulfides stabilise this stretch: Cys93-Cys122, Cys105-Cys150, Cys141-Cys207, Cys142-Cys146, Cys179-Cys211, and Cys187-Cys198. Cys108 is an active-site residue. N-linked (GlcNAc...) asparagine glycosylation occurs at Asn192. Residue Lys220 is modified to N6-acetyllysine. Active-site residues include His278 and Asn298. The propeptide occupies 334 to 339 (QYWEKI).

The protein belongs to the peptidase C1 family. Dimer of a heavy chain and a light chain cross-linked by a disulfide bond. Interacts with SRPX2. Directly interacts with SHKBP1.

Its subcellular location is the lysosome. It is found in the melanosome. The protein localises to the secreted. It localises to the extracellular space. The protein resides in the apical cell membrane. The enzyme catalyses Hydrolysis of proteins with broad specificity for peptide bonds. Preferentially cleaves -Arg-Arg-|-Xaa bonds in small molecule substrates (thus differing from cathepsin L). In addition to being an endopeptidase, shows peptidyl-dipeptidase activity, liberating C-terminal dipeptides.. Its function is as follows. Thiol protease which is believed to participate in intracellular degradation and turnover of proteins. Cleaves matrix extracellular phosphoglycoprotein MEPE. Involved in the solubilization of cross-linked TG/thyroglobulin in the thyroid follicle lumen. Has also been implicated in tumor invasion and metastasis. This Pongo abelii (Sumatran orangutan) protein is Cathepsin B (CTSB).